Reading from the N-terminus, the 278-residue chain is NADPH-dependent 7-cyano-7-deazaguanine reductase (278 aa).

Position 87–89 (87–89) interacts with substrate; the sequence is IES. 89–90 lines the NADPH pocket; sequence SK. Catalysis depends on C185, which acts as the Thioimide intermediate. Catalysis depends on D192, which acts as the Proton donor. 224 to 225 is a binding site for substrate; it reads HE. 253–254 serves as a coordination point for NADPH; it reads RG. The segment at 255–278 is disordered; it reads GLDINPYRSTNPTFSVQNHRSFRQ. The span at 261-278 shows a compositional bias: polar residues; the sequence is YRSTNPTFSVQNHRSFRQ.

The protein belongs to the GTP cyclohydrolase I family. QueF type 2 subfamily. As to quaternary structure, homodimer.

It localises to the cytoplasm. It catalyses the reaction 7-aminomethyl-7-carbaguanine + 2 NADP(+) = 7-cyano-7-deazaguanine + 2 NADPH + 3 H(+). The protein operates within tRNA modification; tRNA-queuosine biosynthesis. Its function is as follows. Catalyzes the NADPH-dependent reduction of 7-cyano-7-deazaguanine (preQ0) to 7-aminomethyl-7-deazaguanine (preQ1). This chain is NADPH-dependent 7-cyano-7-deazaguanine reductase, found in Coxiella burnetii (strain CbuK_Q154) (Coxiella burnetii (strain Q154)).